A 429-amino-acid chain; its full sequence is Enolase (429 aa).

(2R)-2-phosphoglycerate is bound at residue glutamine 163. Glutamate 205 (proton donor) is an active-site residue. Mg(2+) contacts are provided by aspartate 242, glutamate 287, and aspartate 314. Residues lysine 339, arginine 368, serine 369, and lysine 390 each coordinate (2R)-2-phosphoglycerate. Lysine 339 acts as the Proton acceptor in catalysis.

Belongs to the enolase family. It depends on Mg(2+) as a cofactor.

Its subcellular location is the cytoplasm. The protein localises to the secreted. The protein resides in the cell surface. The enzyme catalyses (2R)-2-phosphoglycerate = phosphoenolpyruvate + H2O. Its pathway is carbohydrate degradation; glycolysis; pyruvate from D-glyceraldehyde 3-phosphate: step 4/5. Functionally, catalyzes the reversible conversion of 2-phosphoglycerate (2-PG) into phosphoenolpyruvate (PEP). It is essential for the degradation of carbohydrates via glycolysis. This Magnetococcus marinus (strain ATCC BAA-1437 / JCM 17883 / MC-1) protein is Enolase.